We begin with the raw amino-acid sequence, 150 residues long: uncharacterized protein (150 aa).

A signal peptide spans 1–39 (MKQRFSQVATVIFFVMSIRSPRNLGFFFTLALFVVLVCS).

This is an uncharacterized protein from Saccharomyces cerevisiae (strain ATCC 204508 / S288c) (Baker's yeast).